A 562-amino-acid chain; its full sequence is Phosphoglucomutase-1 (562 aa).

Residue M1 is modified to N-acetylmethionine. K16 is subject to N6-acetyllysine. R23 contacts alpha-D-glucose 1,6-bisphosphate. At T115 the chain carries Phosphothreonine. Residue S117 coordinates alpha-D-glucose 1,6-bisphosphate. The active-site Phosphoserine intermediate is the S117. S117 is a Mg(2+) binding site. 2 positions are modified to phosphoserine: S117 and S134. At T185 the chain carries Phosphothreonine. 3 positions are modified to phosphoserine: S201, S206, and S213. Residues D288, D290, and D292 each coordinate Mg(2+). 2 residues coordinate alpha-D-glucose 1,6-bisphosphate: D292 and R293. An N6-acetyllysine modification is found at K349. Y353 carries the phosphotyrosine modification. Alpha-D-glucose 1,6-bisphosphate is bound at residue T357. Residue S369 is modified to Phosphoserine. Residues E376, S378, and K389 each contribute to the alpha-D-glucose 1,6-bisphosphate site. S378 carries the post-translational modification Phosphoserine. K419 bears the N6-succinyllysine mark. At T467 the chain carries Phosphothreonine; by PAK1. Phosphoserine occurs at positions 477, 485, and 505. T507 carries the phosphothreonine modification. Phosphoserine is present on residues S509 and S541.

It belongs to the phosphohexose mutase family. In terms of assembly, monomer. Requires Mg(2+) as cofactor. Post-translationally, phosphorylation at Thr-467 by PAK1 significantly enhances enzymatic activity.

The protein resides in the cytoplasm. The catalysed reaction is alpha-D-glucose 1-phosphate = alpha-D-glucose 6-phosphate. It catalyses the reaction O-phospho-L-seryl-[protein] + alpha-D-glucose 1-phosphate = alpha-D-glucose 1,6-bisphosphate + L-seryl-[protein]. It carries out the reaction alpha-D-glucose 1,6-bisphosphate + L-seryl-[protein] = O-phospho-L-seryl-[protein] + alpha-D-glucose 6-phosphate. With respect to regulation, glucose-1,6-bisphosphate enhances phosphorylation of the active site Ser-117, and thereby increases enzyme activity. Functionally, catalyzes the reversible isomerization of alpha-D-glucose 1-phosphate to alpha-D-glucose 6-phosphate. The mechanism proceeds via the intermediate compound alpha-D-glucose 1,6-bisphosphate. This enzyme participates in both the breakdown and synthesis of glucose. This is Phosphoglucomutase-1 (PGM1) from Homo sapiens (Human).